Reading from the N-terminus, the 508-residue chain is Adenylosuccinate synthetase 1, chloroplastic (508 aa).

Residues 1-56 (MNISILRLDSNPITTATSPATATANHRSGILGCYNGTYSCRLNQLQQRKKNPSIIV) constitute a chloroplast transit peptide. GTP-binding positions include 95 to 101 (GDEGKGK) and 123 to 125 (GHT). Catalysis depends on aspartate 96, which acts as the Proton acceptor. Residues aspartate 96 and glycine 123 each contribute to the Mg(2+) site. IMP contacts are provided by residues 96 to 99 (DEGK), 121 to 124 (NAGH), threonine 213, arginine 227, glutamine 307, threonine 322, and arginine 386. Catalysis depends on histidine 124, which acts as the Proton donor. Substrate is bound at residue 382 to 388 (TTTGRPR). GTP-binding positions include arginine 388, 414-416 (KLD), and 497-499 (GIG).

This sequence belongs to the adenylosuccinate synthetase family. Homodimer. It depends on Mg(2+) as a cofactor.

The protein localises to the plastid. It localises to the chloroplast. The catalysed reaction is IMP + L-aspartate + GTP = N(6)-(1,2-dicarboxyethyl)-AMP + GDP + phosphate + 2 H(+). Its pathway is purine metabolism; AMP biosynthesis via de novo pathway; AMP from IMP: step 1/2. Its function is as follows. Plays an important role in the de novo pathway and in the salvage pathway of purine nucleotide biosynthesis. Catalyzes the first committed step in the biosynthesis of AMP from IMP. The polypeptide is Adenylosuccinate synthetase 1, chloroplastic (Capsicum frutescens (Cayenne pepper)).